The sequence spans 704 residues: Probable serine/threonine-protein kinase WNK1 (704 aa).

Positions 27 to 284 (GRYNDVLGKG…ARELLKDPFL (258 aa)) constitute a Protein kinase domain. ATP contacts are provided by residues 107 to 110 (TEMF) and lysine 157. Aspartate 174 serves as the catalytic Proton acceptor. Positions 499 to 521 (QTDLQDSGGSSDDGGGQTQHVKD) are disordered.

The protein belongs to the protein kinase superfamily. Ser/Thr protein kinase family. WNK subfamily.

It catalyses the reaction L-seryl-[protein] + ATP = O-phospho-L-seryl-[protein] + ADP + H(+). The catalysed reaction is L-threonyl-[protein] + ATP = O-phospho-L-threonyl-[protein] + ADP + H(+). The polypeptide is Probable serine/threonine-protein kinase WNK1 (WNK1) (Oryza sativa subsp. japonica (Rice)).